Reading from the N-terminus, the 355-residue chain is Histidinol-phosphate aminotransferase (355 aa).

N6-(pyridoxal phosphate)lysine is present on Lys214.

The protein belongs to the class-II pyridoxal-phosphate-dependent aminotransferase family. Histidinol-phosphate aminotransferase subfamily. In terms of assembly, homodimer. The cofactor is pyridoxal 5'-phosphate.

The catalysed reaction is L-histidinol phosphate + 2-oxoglutarate = 3-(imidazol-4-yl)-2-oxopropyl phosphate + L-glutamate. It functions in the pathway amino-acid biosynthesis; L-histidine biosynthesis; L-histidine from 5-phospho-alpha-D-ribose 1-diphosphate: step 7/9. In Buchnera aphidicola subsp. Schizaphis graminum (strain Sg), this protein is Histidinol-phosphate aminotransferase (hisC).